The primary structure comprises 432 residues: Pachytene checkpoint protein 2 homolog (432 aa).

Methionine 1 is subject to N-acetylmethionine. An ATP-binding site is contributed by 179 to 186 (GPPGTGKT).

It belongs to the AAA ATPase family. PCH2 subfamily. As to quaternary structure, specifically interacts with the ligand binding domain of the thyroid receptor (TR). This interaction does not require the presence of thyroid hormone for its interaction. Interacts with proteasome subunit PSMA8; to participate in meiosis progression during spermatogenesis.

Plays a key role in chromosome recombination and chromosome structure development during meiosis. Required at early steps in meiotic recombination that leads to non-crossovers pathways. Also needed for efficient completion of homologous synapsis by influencing crossover distribution along the chromosomes affecting both crossovers and non-crossovers pathways. Also required for development of higher-order chromosome structures and is needed for synaptonemal-complex formation. In males, required for efficient synapsis of the sex chromosomes and for sex body formation. Promotes early steps of the DNA double-strand breaks (DSBs) repair process upstream of the assembly of RAD51 complexes. Required for depletion of HORMAD1 and HORMAD2 from synapsed chromosomes. Plays a role in mitotic spindle assembly checkpoint (SAC) activation. This is Pachytene checkpoint protein 2 homolog (Trip13) from Rattus norvegicus (Rat).